The following is a 232-amino-acid chain: Phosphatidylserine decarboxylase proenzyme (232 aa).

Catalysis depends on Ser-190, which acts as the Schiff-base intermediate with substrate; via pyruvic acid. Ser-190 is modified (pyruvic acid (Ser); by autocatalysis).

This sequence belongs to the phosphatidylserine decarboxylase family. PSD-A subfamily. As to quaternary structure, heterodimer of a large membrane-associated beta subunit and a small pyruvoyl-containing alpha subunit. Pyruvate is required as a cofactor. Is synthesized initially as an inactive proenzyme. Formation of the active enzyme involves a self-maturation process in which the active site pyruvoyl group is generated from an internal serine residue via an autocatalytic post-translational modification. Two non-identical subunits are generated from the proenzyme in this reaction, and the pyruvate is formed at the N-terminus of the alpha chain, which is derived from the carboxyl end of the proenzyme. The post-translation cleavage follows an unusual pathway, termed non-hydrolytic serinolysis, in which the side chain hydroxyl group of the serine supplies its oxygen atom to form the C-terminus of the beta chain, while the remainder of the serine residue undergoes an oxidative deamination to produce ammonia and the pyruvoyl prosthetic group on the alpha chain.

It is found in the cell membrane. The enzyme catalyses a 1,2-diacyl-sn-glycero-3-phospho-L-serine + H(+) = a 1,2-diacyl-sn-glycero-3-phosphoethanolamine + CO2. Its pathway is phospholipid metabolism; phosphatidylethanolamine biosynthesis; phosphatidylethanolamine from CDP-diacylglycerol: step 2/2. Its function is as follows. Catalyzes the formation of phosphatidylethanolamine (PtdEtn) from phosphatidylserine (PtdSer). This Mesorhizobium japonicum (strain LMG 29417 / CECT 9101 / MAFF 303099) (Mesorhizobium loti (strain MAFF 303099)) protein is Phosphatidylserine decarboxylase proenzyme.